A 340-amino-acid polypeptide reads, in one-letter code: S-adenosylmethionine:tRNA ribosyltransferase-isomerase (340 aa).

The protein belongs to the QueA family. In terms of assembly, monomer.

It localises to the cytoplasm. It carries out the reaction 7-aminomethyl-7-carbaguanosine(34) in tRNA + S-adenosyl-L-methionine = epoxyqueuosine(34) in tRNA + adenine + L-methionine + 2 H(+). It participates in tRNA modification; tRNA-queuosine biosynthesis. Transfers and isomerizes the ribose moiety from AdoMet to the 7-aminomethyl group of 7-deazaguanine (preQ1-tRNA) to give epoxyqueuosine (oQ-tRNA). In Aliarcobacter butzleri (strain RM4018) (Arcobacter butzleri), this protein is S-adenosylmethionine:tRNA ribosyltransferase-isomerase.